Here is a 334-residue protein sequence, read N- to C-terminus: Glycerol-3-phosphate dehydrogenase [NAD(P)+] (334 aa).

Residues W13, R33, and K106 each coordinate NADPH. Residues K106, G137, and S139 each coordinate sn-glycerol 3-phosphate. A141 provides a ligand contact to NADPH. Sn-glycerol 3-phosphate contacts are provided by K192, D245, S255, R256, and N257. Catalysis depends on K192, which acts as the Proton acceptor. Position 256 (R256) interacts with NADPH. V280 and E282 together coordinate NADPH.

This sequence belongs to the NAD-dependent glycerol-3-phosphate dehydrogenase family.

The protein resides in the cytoplasm. The catalysed reaction is sn-glycerol 3-phosphate + NAD(+) = dihydroxyacetone phosphate + NADH + H(+). It catalyses the reaction sn-glycerol 3-phosphate + NADP(+) = dihydroxyacetone phosphate + NADPH + H(+). The protein operates within membrane lipid metabolism; glycerophospholipid metabolism. Catalyzes the reduction of the glycolytic intermediate dihydroxyacetone phosphate (DHAP) to sn-glycerol 3-phosphate (G3P), the key precursor for phospholipid synthesis. This Chlamydia muridarum (strain MoPn / Nigg) protein is Glycerol-3-phosphate dehydrogenase [NAD(P)+].